The following is a 25-amino-acid chain: Small ribosomal subunit protein eS32 eS32z/eS32y/eS32x/eS32w/eS32v (25 aa).

The disordered stretch occupies residues 1–25 (MRAKWKKKRMRRLKRKRRKMRQRSK).

The protein belongs to the eukaryotic ribosomal protein eS32 family. Component of the small ribosomal subunit (SSU).

The chain is Small ribosomal subunit protein eS32 eS32z/eS32y/eS32x/eS32w/eS32v (RPL41A) from Arabidopsis thaliana (Mouse-ear cress).